A 349-amino-acid chain; its full sequence is Green-sensitive opsin-4 (349 aa).

At 1 to 36 (MNGTEGNNFYIPLSNRTGLARSPYEYPQYYLAEPWQ) the chain is on the extracellular side. Asn2 and Asn15 each carry an N-linked (GlcNAc...) asparagine glycan. Residues 37-61 (FKLLAVYMFFLICLGFPINGLTLLV) traverse the membrane as a helical segment. Over 62–73 (TAQHKKLRQPLN) the chain is Cytoplasmic. A helical membrane pass occupies residues 74–99 (FILVNLAVAGTIMVCFGFTVTFYTAI). Residues 100-113 (NGYFVLGPTGCAIE) are Extracellular-facing. Cys110 and Cys187 are joined by a disulfide. The chain crosses the membrane as a helical span at residues 114–133 (GFMATLGGEVALWSLVVLAV). Residues 134-152 (ERYIVVCKPMGSFKFSASH) are Cytoplasmic-facing. Residues 153–176 (AFAGCAFTWVMAMACAAPPLVGWS) traverse the membrane as a helical segment. The Extracellular portion of the chain corresponds to 177-202 (RYIPEGMQCSCGPDYYTLNPEYNNES). A glycan (N-linked (GlcNAc...) asparagine) is linked at Asn200. The helical transmembrane segment at 203–230 (YVLYMFICHFILPVTIIFFTYGRLVCTV) threads the bilayer. The Cytoplasmic portion of the chain corresponds to 231–252 (KAAAAQQQESESTQKAEREVTR). A helical membrane pass occupies residues 253–276 (MVILMVLGFLIAWTPYATVAAWIF). Topologically, residues 277–284 (FNKGAAFS) are extracellular. A helical membrane pass occupies residues 285–309 (AQFMAVPAFFSKTSALYNPVIYVLL). Lys296 bears the N6-(retinylidene)lysine mark. Residues 310–349 (NKQFRNCMLTTLFCGKNPLGDDESSTVSTSKTEVSSVSPA) lie on the Cytoplasmic side of the membrane. The disordered stretch occupies residues 329 to 349 (GDDESSTVSTSKTEVSSVSPA). The segment covering 334–349 (STVSTSKTEVSSVSPA) has biased composition (low complexity).

The protein belongs to the G-protein coupled receptor 1 family. Opsin subfamily. Phosphorylated on some or all of the serine and threonine residues present in the C-terminal region. Retinal double cone accessory photoreceptor cell outer segments.

It is found in the membrane. Visual pigments are the light-absorbing molecules that mediate vision. They consist of an apoprotein, opsin, covalently linked to cis-retinal. This Danio rerio (Zebrafish) protein is Green-sensitive opsin-4 (opn1mw4).